We begin with the raw amino-acid sequence, 318 residues long: Protoheme IX farnesyltransferase (318 aa).

9 helical membrane passes run valine 33–histidine 53, proline 54–leucine 74, glycine 102–alanine 122, valine 125–tryptophan 145, isoleucine 154–glycine 174, tryptophan 181–phenylalanine 201, valine 225–asparagine 245, isoleucine 246–alanine 266, and phenylalanine 288–leucine 308.

The protein belongs to the UbiA prenyltransferase family. Protoheme IX farnesyltransferase subfamily. In terms of assembly, interacts with CtaA.

It localises to the cell inner membrane. It catalyses the reaction heme b + (2E,6E)-farnesyl diphosphate + H2O = Fe(II)-heme o + diphosphate. It participates in porphyrin-containing compound metabolism; heme O biosynthesis; heme O from protoheme: step 1/1. Its function is as follows. Converts heme B (protoheme IX) to heme O by substitution of the vinyl group on carbon 2 of heme B porphyrin ring with a hydroxyethyl farnesyl side group. The protein is Protoheme IX farnesyltransferase of Ruegeria pomeroyi (strain ATCC 700808 / DSM 15171 / DSS-3) (Silicibacter pomeroyi).